The chain runs to 802 residues: Endoplasmin (802 aa).

The first 21 residues, 1–21 (MRALWVLGLCCVLLTFGSARA), serve as a signal peptide directing secretion. Positions 42 to 44 (SRT) match the SRT pseudosubstrate motif motif. Asparagine 62 is a glycosylation site (N-linked (GlcNAc...) asparagine). Position 64 is a phosphoserine (serine 64). N-linked (GlcNAc...) asparagine glycosylation is present at asparagine 107. Residues asparagine 107, aspartate 149, and asparagine 162 each coordinate ATP. Lysine 168 bears the N6-(2-hydroxyisobutyryl)lysine mark. Position 172 is a phosphoserine (serine 172). Position 199 (phenylalanine 199) interacts with ATP. A glycan (N-linked (GlcNAc...) asparagine) is linked at asparagine 217. The tract at residues 288–323 (TVEEPAEEEEAAKEEKEEADDEAAVEEEEEEKKPKT) is disordered. Acidic residues predominate over residues 289–317 (VEEPAEEEEAAKEEKEEADDEAAVEEEEE). Residue serine 403 is modified to Phosphoserine. Lysine 404 is subject to N6-succinyllysine. Asparagine 445 carries an N-linked (GlcNAc...) asparagine glycan. Position 447 is a phosphoserine (serine 447). At lysine 479 the chain carries N6-acetyllysine. N-linked (GlcNAc...) asparagine glycosylation is found at asparagine 481 and asparagine 502. Lysine 633 is modified (N6-succinyllysine). The disordered stretch occupies residues 750 to 802 (DPDAKVEEEPEEEPEDTTEDTEQDEEEEMDAGTDEEEQEQEPEKKSTAEKDEL). The span at 757–789 (EEPEEEPEDTTEDTEQDEEEEMDAGTDEEEQEQ) shows a compositional bias: acidic residues. Phosphothreonine is present on threonine 782. The segment covering 790-802 (EPEKKSTAEKDEL) has biased composition (basic and acidic residues). The Prevents secretion from ER signature appears at 799 to 802 (KDEL).

The protein belongs to the heat shock protein 90 family. As to quaternary structure, homodimer; disulfide-linked. Component of an EIF2 complex at least composed of CELF1/CUGBP1, CALR, CALR3, EIF2S1, EIF2S2, HSP90B1 and HSPA5. Part of a large chaperone multiprotein complex comprising DNAJB11, HSP90B1, HSPA5, HYOU, PDIA2, PDIA4, PDIA6, PPIB, SDF2L1, UGGT1 and very small amounts of ERP29, but not, or at very low levels, CALR nor CANX. Interacts with AIMP1; regulates its retention in the endoplasmic reticulum. Hyperglycosylated form interacts with OS9; promoting its degradation by the endoplasmic reticulum associated degradation (ERAD). Interacts with CNPY3. This interaction is disrupted in the presence of ATP. Interacts with TLR4 and TLR9, but not with TLR3. Interacts with MZB1 in a calcium-dependent manner. Interacts with METTL23. Interacts with IL1B; the interaction facilitates cargo translocation into the ERGIC. Interacts with EIF2AK3. Phosphorylated by CK2. In terms of processing, N-glycosylated cotranslationally at Asn-217 by STT3A-containing OST-A complex: this glycosylation is constitutive. In response to various stress, 5 additional facultative sites (Asn-62, Asn-107, Asn-445, Asn-481 and Asn-502) can be glycosylated post-translationally by STT3B-containing OST-B complex, leading to a hyperglycosylated form that is degraded by the ER-associated degradation (ERAD) pathway. In normal conditions, the OST-A complex together with CCDC134 prevent glycosylation at facultative sites during protein folding, thereby preventing hyperglycosylation. Mechanistically, nascent HSP90B1 is tethered during translation to a specialized CCDC134-containing translocon that forms a microenvironment for its folding, in which STT3A associates with the SRT pseudosubstrate motif, and prevents access to facultative glycosylation sites until folding is completed, rendering its facultative sites inaccessible to the OST-B complex.

Its subcellular location is the endoplasmic reticulum lumen. The protein localises to the sarcoplasmic reticulum lumen. It is found in the melanosome. It catalyses the reaction ATP + H2O = ADP + phosphate + H(+). Its function is as follows. ATP-dependent chaperone involved in the processing of proteins in the endoplasmic reticulum, regulating their transport. Together with MESD, acts as a modulator of the Wnt pathway by promoting the folding of LRP6, a coreceptor of the canonical Wnt pathway. When associated with CNPY3, required for proper folding of Toll-like receptors. Promotes folding and trafficking of TLR4 to the cell surface. May participate in the unfolding of cytosolic leaderless cargos (lacking the secretion signal sequence) such as the interleukin 1/IL-1 to facilitate their translocation into the ERGIC (endoplasmic reticulum-Golgi intermediate compartment) and secretion; the translocation process is mediated by the cargo receptor TMED10. This chain is Endoplasmin (HSP90B1), found in Oryctolagus cuniculus (Rabbit).